The following is a 396-amino-acid chain: S-adenosylmethionine synthase (396 aa).

Histidine 16 is an ATP binding site. Aspartate 18 contributes to the Mg(2+) binding site. K(+) is bound at residue glutamate 44. Residues glutamate 57 and glutamine 100 each coordinate L-methionine. The interval 100 to 110 is flexible loop; that stretch reads QSVDIAQGVDR. Residues 165–167, aspartate 240, 246–247, alanine 263, and lysine 267 contribute to the ATP site; these read DAK and RK. Aspartate 240 is a binding site for L-methionine. L-methionine is bound at residue lysine 271.

This sequence belongs to the AdoMet synthase family. Homotetramer; dimer of dimers. It depends on Mg(2+) as a cofactor. Requires K(+) as cofactor.

The protein resides in the cytoplasm. The catalysed reaction is L-methionine + ATP + H2O = S-adenosyl-L-methionine + phosphate + diphosphate. Its pathway is amino-acid biosynthesis; S-adenosyl-L-methionine biosynthesis; S-adenosyl-L-methionine from L-methionine: step 1/1. Functionally, catalyzes the formation of S-adenosylmethionine (AdoMet) from methionine and ATP. The overall synthetic reaction is composed of two sequential steps, AdoMet formation and the subsequent tripolyphosphate hydrolysis which occurs prior to release of AdoMet from the enzyme. This chain is S-adenosylmethionine synthase, found in Pseudomonas syringae pv. syringae (strain B728a).